The following is a 465-amino-acid chain: ATP synthase subunit beta (465 aa).

Residue 148–155 (GGAGVGKT) coordinates ATP.

Belongs to the ATPase alpha/beta chains family. F-type ATPases have 2 components, CF(1) - the catalytic core - and CF(0) - the membrane proton channel. CF(1) has five subunits: alpha(3), beta(3), gamma(1), delta(1), epsilon(1). CF(0) has three main subunits: a(1), b(2) and c(9-12). The alpha and beta chains form an alternating ring which encloses part of the gamma chain. CF(1) is attached to CF(0) by a central stalk formed by the gamma and epsilon chains, while a peripheral stalk is formed by the delta and b chains.

Its subcellular location is the cell inner membrane. The catalysed reaction is ATP + H2O + 4 H(+)(in) = ADP + phosphate + 5 H(+)(out). Produces ATP from ADP in the presence of a proton gradient across the membrane. The catalytic sites are hosted primarily by the beta subunits. This is ATP synthase subunit beta from Neisseria meningitidis serogroup C (strain 053442).